The chain runs to 117 residues: Large ribosomal subunit protein bL20 (117 aa).

This sequence belongs to the bacterial ribosomal protein bL20 family.

Its function is as follows. Binds directly to 23S ribosomal RNA and is necessary for the in vitro assembly process of the 50S ribosomal subunit. It is not involved in the protein synthesizing functions of that subunit. In Rickettsia peacockii (strain Rustic), this protein is Large ribosomal subunit protein bL20.